A 429-amino-acid chain; its full sequence is Glutamate-1-semialdehyde 2,1-aminomutase 2 (429 aa).

Lys268 carries the post-translational modification N6-(pyridoxal phosphate)lysine.

Belongs to the class-III pyridoxal-phosphate-dependent aminotransferase family. HemL subfamily. Homodimer. Pyridoxal 5'-phosphate is required as a cofactor.

The protein localises to the cytoplasm. The enzyme catalyses (S)-4-amino-5-oxopentanoate = 5-aminolevulinate. The protein operates within porphyrin-containing compound metabolism; protoporphyrin-IX biosynthesis; 5-aminolevulinate from L-glutamyl-tRNA(Glu): step 2/2. This Geobacillus thermodenitrificans (strain NG80-2) protein is Glutamate-1-semialdehyde 2,1-aminomutase 2.